A 361-amino-acid polypeptide reads, in one-letter code: Putative geranylgeranyl pyrophosphate synthase 8, chloroplastic (361 aa).

Residues 1–39 (MATTVHLSSFSLFIQSRGRRDNSISSVKSLKKRTGLSPS) constitute a chloroplast transit peptide. Residues 24 to 58 (ISSVKSLKKRTGLSPSSALTSQGGRDMIPPQGKSN) are disordered. Over residues 36 to 46 (LSPSSALTSQG) the composition is skewed to polar residues. 3 residues coordinate isopentenyl diphosphate: lysine 107, arginine 110, and histidine 139. The Mg(2+) site is built by aspartate 146 and aspartate 152. Arginine 157 is a dimethylallyl diphosphate binding site. Arginine 158 is a binding site for isopentenyl diphosphate. Lysine 246, threonine 247, glutamine 284, lysine 301, and lysine 311 together coordinate dimethylallyl diphosphate.

It belongs to the FPP/GGPP synthase family. Monomer. Mg(2+) is required as a cofactor.

The protein resides in the plastid. It localises to the chloroplast. It carries out the reaction isopentenyl diphosphate + dimethylallyl diphosphate = (2E)-geranyl diphosphate + diphosphate. It catalyses the reaction isopentenyl diphosphate + (2E)-geranyl diphosphate = (2E,6E)-farnesyl diphosphate + diphosphate. The enzyme catalyses isopentenyl diphosphate + (2E,6E)-farnesyl diphosphate = (2E,6E,10E)-geranylgeranyl diphosphate + diphosphate. It participates in isoprenoid biosynthesis; farnesyl diphosphate biosynthesis; farnesyl diphosphate from geranyl diphosphate and isopentenyl diphosphate: step 1/1. The protein operates within isoprenoid biosynthesis; geranyl diphosphate biosynthesis; geranyl diphosphate from dimethylallyl diphosphate and isopentenyl diphosphate: step 1/1. It functions in the pathway isoprenoid biosynthesis; geranylgeranyl diphosphate biosynthesis; geranylgeranyl diphosphate from farnesyl diphosphate and isopentenyl diphosphate: step 1/1. In terms of biological role, catalyzes the trans-addition of the three molecules of IPP onto DMAPP to form geranylgeranyl pyrophosphate. This Arabidopsis thaliana (Mouse-ear cress) protein is Putative geranylgeranyl pyrophosphate synthase 8, chloroplastic.